The sequence spans 148 residues: Lysozyme C (148 aa).

A signal peptide spans 1–18 (MKAVIILGLVLLSVTVQG). The 130-residue stretch at 19-148 (KIFERCELAR…VSQYVQGCGV (130 aa)) folds into the C-type lysozyme domain. 4 cysteine pairs are disulfide-bonded: Cys24-Cys146, Cys48-Cys134, Cys83-Cys99, and Cys95-Cys113. Catalysis depends on residues Glu53 and Asp71.

The protein belongs to the glycosyl hydrolase 22 family. Monomer.

The protein resides in the secreted. It catalyses the reaction Hydrolysis of (1-&gt;4)-beta-linkages between N-acetylmuramic acid and N-acetyl-D-glucosamine residues in a peptidoglycan and between N-acetyl-D-glucosamine residues in chitodextrins.. Its function is as follows. Lysozymes have primarily a bacteriolytic function; those in tissues and body fluids are associated with the monocyte-macrophage system and enhance the activity of immunoagents. This chain is Lysozyme C (LYZ), found in Macaca mulatta (Rhesus macaque).